The sequence spans 310 residues: Olfactory receptor 4D1 (310 aa).

The Extracellular portion of the chain corresponds to 1–25; sequence MEPQNTTQVSMFVLLGFSQTQELQK. N-linked (GlcNAc...) asparagine glycosylation occurs at Asn5. The chain crosses the membrane as a helical span at residues 26–49; the sequence is FLFLLFLLVYVTTIVGNLLIMVTV. Topologically, residues 50–57 are cytoplasmic; that stretch reads TFDCRLHT. Residues 58-79 form a helical membrane-spanning segment; the sequence is PMYFLLRNLALIDLCYSTVTSP. Topologically, residues 80 to 100 are extracellular; sequence KMLVDFLHETKTISYQGCMAQ. Cys97 and Cys189 are joined by a disulfide. Residues 101 to 120 traverse the membrane as a helical segment; it reads IFFFHLLGGGTVFFLSVMAY. Residues 121–139 are Cytoplasmic-facing; sequence DRYIAISQPLRYVTIMNTQ. Residues 140-158 traverse the membrane as a helical segment; it reads LCVGLVVAAWVGGFVHSIV. Topologically, residues 159 to 195 are extracellular; the sequence is QLALILPLPFCGPNILDNFYCDVPQVLRLACTDTSLL. Residues 196–219 form a helical membrane-spanning segment; the sequence is EFLMISNSGLLVIIWFLLLLISYT. Residues 220 to 235 are Cytoplasmic-facing; sequence VILVMLRSHSGKARRK. A helical membrane pass occupies residues 236-258; the sequence is AASTCTTHIIVVSMIFIPCIYIY. Topologically, residues 259 to 269 are extracellular; the sequence is TWPFTPFLMDK. Residues 270–289 form a helical membrane-spanning segment; sequence AVSISYTVMTPMLNPMIYTL. The Cytoplasmic segment spans residues 290–310; it reads RNQDMKAAMRRLGKCLVICRE.

This sequence belongs to the G-protein coupled receptor 1 family.

The protein localises to the cell membrane. Functionally, odorant receptor. In Homo sapiens (Human), this protein is Olfactory receptor 4D1 (OR4D1).